The primary structure comprises 302 residues: N-acetylmuramic acid 6-phosphate etherase (302 aa).

Residues 58-221 form the SIS domain; that stretch reads IGEAFLNGGR…STGAMVKTGK (164 aa). Glu-86 (proton donor) is an active-site residue. Glu-117 is an active-site residue.

This sequence belongs to the GCKR-like family. MurNAc-6-P etherase subfamily. Homodimer.

The catalysed reaction is N-acetyl-D-muramate 6-phosphate + H2O = N-acetyl-D-glucosamine 6-phosphate + (R)-lactate. It participates in amino-sugar metabolism; N-acetylmuramate degradation. Its function is as follows. Specifically catalyzes the cleavage of the D-lactyl ether substituent of MurNAc 6-phosphate, producing GlcNAc 6-phosphate and D-lactate. The sequence is that of N-acetylmuramic acid 6-phosphate etherase from Clostridium botulinum (strain Hall / ATCC 3502 / NCTC 13319 / Type A).